Here is a 204-residue protein sequence, read N- to C-terminus: MSAPQPHDLLWGMTPAALPVDAPAWATQVLAAGQPVVVRRACCAAGWVAVGLRGEGRAQRLGVQMRLADIRRQLRPEALRGQGTSPWAALQALASVAPVLDACGLAWGPTGGVGYQLATGVEVLHAASDLDLLLRTPRPMSRAKARELLDSLDCSPCRIDVQLQTPAGGIALREWAGVAQRVLLKSALGARLVADPWNLLECAA.

Active-site residues include aspartate 129 and aspartate 131.

It belongs to the MdcG family.

It catalyses the reaction apo-[malonate decarboxylase ACP] + 2'-(5''-triphospho-alpha-D-ribosyl)-3'-dephospho-CoA = holo-[malonate decarboxylase ACP] + diphosphate. Functionally, transfers 2'-(5-triphosphoribosyl)-3'-dephosphocoenzyme-A to the apo-[acyl-carrier-protein] of the malonate decarboxylase to yield holo-[acyl-carrier-protein]. This chain is Phosphoribosyl-dephospho-CoA transferase, found in Pseudomonas putida (strain W619).